We begin with the raw amino-acid sequence, 277 residues long: Putative phosphoenolpyruvate synthase regulatory protein (277 aa).

An ADP-binding site is contributed by 157–164; that stretch reads GVSRCGKT.

It belongs to the pyruvate, phosphate/water dikinase regulatory protein family. PSRP subfamily.

The enzyme catalyses [pyruvate, water dikinase] + ADP = [pyruvate, water dikinase]-phosphate + AMP + H(+). The catalysed reaction is [pyruvate, water dikinase]-phosphate + phosphate + H(+) = [pyruvate, water dikinase] + diphosphate. Its function is as follows. Bifunctional serine/threonine kinase and phosphorylase involved in the regulation of the phosphoenolpyruvate synthase (PEPS) by catalyzing its phosphorylation/dephosphorylation. This Erwinia tasmaniensis (strain DSM 17950 / CFBP 7177 / CIP 109463 / NCPPB 4357 / Et1/99) protein is Putative phosphoenolpyruvate synthase regulatory protein.